Reading from the N-terminus, the 371-residue chain is GDSL esterase/lipase At3g27950 (371 aa).

A signal peptide spans 1-23 (MAISKITLAIIVLLLGFTEKLSA). Catalysis depends on Ser-39, which acts as the Nucleophile. Asn-82, Asn-143, Asn-178, Asn-194, and Asn-315 each carry an N-linked (GlcNAc...) asparagine glycan. Catalysis depends on residues Asp-334 and His-337.

It belongs to the 'GDSL' lipolytic enzyme family.

It localises to the secreted. This is GDSL esterase/lipase At3g27950 from Arabidopsis thaliana (Mouse-ear cress).